The chain runs to 1457 residues: ABC transporter G family member 36 (1457 aa).

A disordered region spans residues 14-43 (RLGGSMRGDSGSMWRRGDDVFSRSSREEDD). Residues 28–39 (RRGDDVFSRSSR) show a composition bias toward basic and acidic residues. The ABC transporter 1 domain occupies 164–437 (GNALGILPNR…FESTGFKCPD (274 aa)). 197–204 (GPPGSGKT) contributes to the ATP binding site. The ABC transmembrane type-2 1 domain maps to 515–728 (ELLKANIDRE…AQNAISVNEL (214 aa)). The next 7 helical transmembrane spans lie at 533–553 (FVYM…MTLF), 565–585 (SGGI…FNGF), 621–641 (IPIT…VIGF), 653–673 (LLML…GGAA), 677–697 (IVAN…GGFI), 706–726 (WWIW…ISVN), and 765–785 (IGFG…TLAL). The tract at residues 821–841 (SSGSTRRPMGNGTENDSTIVD) is disordered. One can recognise an ABC transporter 2 domain in the interval 860-1112 (LSFDNVRYSV…ELIKYFESIP (253 aa)). Residue 905 to 912 (GVSGAGKT) coordinates ATP. The ABC transmembrane type-2 2 domain maps to 1185-1399 (TQCMACLWKQ…TLYGLVVSQF (215 aa)). 7 consecutive transmembrane segments (helical) span residues 1209 to 1229 (FFFT…LGGK), 1244 to 1264 (YAAV…VVAV), 1292 to 1312 (IPYT…MIGF), 1319 to 1339 (FFWY…YGMM), 1349 to 1369 (IASI…GFVI), 1380 to 1400 (WYCW…SQFG), and 1429 to 1449 (WVAT…GFAI).

Belongs to the ABC transporter superfamily. ABCG family. PDR (TC 3.A.1.205) subfamily.

The protein resides in the membrane. Functionally, may be a general defense protein. This is ABC transporter G family member 36 from Oryza sativa subsp. indica (Rice).